The primary structure comprises 569 residues: Proline--tRNA ligase (569 aa).

This sequence belongs to the class-II aminoacyl-tRNA synthetase family. ProS type 1 subfamily. Homodimer.

It is found in the cytoplasm. The catalysed reaction is tRNA(Pro) + L-proline + ATP = L-prolyl-tRNA(Pro) + AMP + diphosphate. In terms of biological role, catalyzes the attachment of proline to tRNA(Pro) in a two-step reaction: proline is first activated by ATP to form Pro-AMP and then transferred to the acceptor end of tRNA(Pro). As ProRS can inadvertently accommodate and process non-cognate amino acids such as alanine and cysteine, to avoid such errors it has two additional distinct editing activities against alanine. One activity is designated as 'pretransfer' editing and involves the tRNA(Pro)-independent hydrolysis of activated Ala-AMP. The other activity is designated 'posttransfer' editing and involves deacylation of mischarged Ala-tRNA(Pro). The misacylated Cys-tRNA(Pro) is not edited by ProRS. The polypeptide is Proline--tRNA ligase (Halalkalibacterium halodurans (strain ATCC BAA-125 / DSM 18197 / FERM 7344 / JCM 9153 / C-125) (Bacillus halodurans)).